The primary structure comprises 1405 residues: DNA-directed RNA polymerase subunit beta' (1405 aa).

Residues Cys-70, Cys-72, Cys-85, and Cys-88 each contribute to the Zn(2+) site. Mg(2+) is bound by residues Asp-460, Asp-462, and Asp-464. The Zn(2+) site is built by Cys-814, Cys-888, Cys-895, and Cys-898.

It belongs to the RNA polymerase beta' chain family. As to quaternary structure, the RNAP catalytic core consists of 2 alpha, 1 beta, 1 beta' and 1 omega subunit. When a sigma factor is associated with the core the holoenzyme is formed, which can initiate transcription. Mg(2+) is required as a cofactor. The cofactor is Zn(2+).

The enzyme catalyses RNA(n) + a ribonucleoside 5'-triphosphate = RNA(n+1) + diphosphate. Its function is as follows. DNA-dependent RNA polymerase catalyzes the transcription of DNA into RNA using the four ribonucleoside triphosphates as substrates. This chain is DNA-directed RNA polymerase subunit beta', found in Shewanella woodyi (strain ATCC 51908 / MS32).